Consider the following 387-residue polypeptide: WD repeat-containing protein 89 (387 aa).

6 WD repeats span residues 21–65 (KEPT…VLRE), 68–107 (GYPGLLNGVRFANSCDSVYSACTDGTVKCWDARVAREKPV), 112–156 (GYPS…QNLS), 168–208 (THSD…EEDA), 214–254 (NSIS…TDEP), and 319–358 (GHAATVRSFCWNVQDDSLLTGGEDAQLLLWKPGAIEKTFT).

The polypeptide is WD repeat-containing protein 89 (WDR89) (Homo sapiens (Human)).